Here is a 71-residue protein sequence, read N- to C-terminus: Ranatuerin-2PLa (71 aa).

Residues 1–22 (MFTTKKSMLLFFFLGTISLSLC) form the signal peptide. The propeptide occupies 23–41 (EQERGADEDDGVEMTEEEV). The cysteines at positions 66 and 71 are disulfide-linked.

As to expression, expressed by the skin glands.

The protein localises to the secreted. Functionally, may have antimicrobial activity against the Gram-negative bacterium E.coli. In Lithobates palustris (Pickerel frog), this protein is Ranatuerin-2PLa.